Here is a 119-residue protein sequence, read N- to C-terminus: Holo-[acyl-carrier-protein] synthase (119 aa).

The Mg(2+) site is built by Asp-2 and Glu-51.

The protein belongs to the P-Pant transferase superfamily. AcpS family. Mg(2+) serves as cofactor.

It is found in the cytoplasm. It carries out the reaction apo-[ACP] + CoA = holo-[ACP] + adenosine 3',5'-bisphosphate + H(+). Its function is as follows. Transfers the 4'-phosphopantetheine moiety from coenzyme A to a Ser of acyl-carrier-protein. In Chlorobium luteolum (strain DSM 273 / BCRC 81028 / 2530) (Pelodictyon luteolum), this protein is Holo-[acyl-carrier-protein] synthase.